A 540-amino-acid polypeptide reads, in one-letter code: Chaperonin GroEL 2 (540 aa).

ATP contacts are provided by residues 29 to 32 (TLGP), 86 to 90 (DGTTT), G413, 476 to 478 (NAA), and D492.

Belongs to the chaperonin (HSP60) family. Forms a cylinder of 14 subunits composed of two heptameric rings stacked back-to-back. Interacts with the co-chaperonin GroES.

The protein localises to the cytoplasm. The enzyme catalyses ATP + H2O + a folded polypeptide = ADP + phosphate + an unfolded polypeptide.. Its function is as follows. Together with its co-chaperonin GroES, plays an essential role in assisting protein folding. The GroEL-GroES system forms a nano-cage that allows encapsulation of the non-native substrate proteins and provides a physical environment optimized to promote and accelerate protein folding. The polypeptide is Chaperonin GroEL 2 (Streptomyces albus G).